The following is a 138-amino-acid chain: Hexon-interlacing protein (138 aa).

The stretch at 100–127 forms a coiled coil; the sequence is LLVLLAQLEALTQRLGELSKQVAQLREQ.

The protein belongs to the adenoviridae hexon-interlacing protein family. As to quaternary structure, homotrimer. Interacts with hexon protein; this interaction tethers the hexons together. Self-interacts with adjacent proteins. Interacts with kinesin light chain KLC1; this interaction leads to capsid disruption at the nuclear pore complex during virus entry into host cell.

Its subcellular location is the virion. The protein localises to the host nucleus. Structural component of the virion that acts as a cement protein on the capsid exterior and forms triskelion structures consisting of three molecules that stabilize three hexon trimers at the center of each icosahedral facet and fixes the peripentonal hexons. Dispensable for assembly. During virus entry, recruits the anterograde motor kinesin-1 to the capsid docked at the nuclear pore complex thereby subjecting the docked capsid to a pulling force. The resulting tension leads to capsid disruption, dispersion of capsid fragments toward cell periphery and eventually viral DNA entry into the host nucleus. The chain is Hexon-interlacing protein from Human adenovirus B serotype 7 (HAdV-7).